Reading from the N-terminus, the 800-residue chain is Ion-translocating oxidoreductase complex subunit C (800 aa).

4Fe-4S ferredoxin-type domains lie at 367–398 (DEFS…QQLY) and 408–437 (KARG…VQYY). Cysteine 378, cysteine 381, cysteine 384, cysteine 388, cysteine 417, cysteine 420, cysteine 423, and cysteine 427 together coordinate [4Fe-4S] cluster. 5 stretches are compositionally biased toward low complexity: residues 536 to 553 (GATP…APAP), 571 to 583 (AKQA…PAAT), 599 to 617 (AAIA…APAA), 647 to 667 (AKQA…ADPA), and 675 to 690 (AAIA…KQAA). Disordered regions lie at residues 536–558 (GATP…DDPR), 571–631 (AKQA…QDDP), and 647–706 (AKQA…ENTD). Polar residues predominate over residues 693–705 (HATTEPVTVQENT).

It belongs to the 4Fe4S bacterial-type ferredoxin family. RnfC subfamily. As to quaternary structure, the complex is composed of six subunits: RnfA, RnfB, RnfC, RnfD, RnfE and RnfG. [4Fe-4S] cluster serves as cofactor.

It localises to the cell inner membrane. In terms of biological role, part of a membrane-bound complex that couples electron transfer with translocation of ions across the membrane. The polypeptide is Ion-translocating oxidoreductase complex subunit C (Edwardsiella ictaluri (strain 93-146)).